Reading from the N-terminus, the 489-residue chain is Inositol-pentakisphosphate 2-kinase (489 aa).

An EXKPK motif motif is present at residues 136-140; sequence EIKPK.

The protein belongs to the IPK1 type 2 family.

It is found in the cytoplasm. Its subcellular location is the nucleus. It catalyses the reaction 1D-myo-inositol 1,3,4,5,6-pentakisphosphate + ATP = 1D-myo-inositol hexakisphosphate + ADP + H(+). Phosphorylates Ins(1,3,4,5,6)P5 at position 2 to form Ins(1,2,3,4,5,6)P6 (InsP6 or phytate). InsP6 is involved in many processes such as mRNA export, non-homologous end-joining, endocytosis, ion channel regulation. It also protects cells from TNF-alpha-induced apoptosis. The polypeptide is Inositol-pentakisphosphate 2-kinase (Ippk) (Rattus norvegicus (Rat)).